The chain runs to 172 residues: Large ribosomal subunit protein uL10 (172 aa).

This sequence belongs to the universal ribosomal protein uL10 family. Part of the ribosomal stalk of the 50S ribosomal subunit. The N-terminus interacts with L11 and the large rRNA to form the base of the stalk. The C-terminus forms an elongated spine to which L12 dimers bind in a sequential fashion forming a multimeric L10(L12)X complex.

In terms of biological role, forms part of the ribosomal stalk, playing a central role in the interaction of the ribosome with GTP-bound translation factors. This chain is Large ribosomal subunit protein uL10, found in Ruegeria sp. (strain TM1040) (Silicibacter sp.).